Consider the following 432-residue polypeptide: Phosphomethylpyrimidine synthase (432 aa).

Substrate is bound by residues Asn66, Met95, Tyr124, His163, 185–187 (SRG), 226–229 (DGLR), and Glu265. His269 is a binding site for Zn(2+). Tyr292 lines the substrate pocket. Residue His333 coordinates Zn(2+). The [4Fe-4S] cluster site is built by Cys409, Cys412, and Cys416.

It belongs to the ThiC family. It depends on [4Fe-4S] cluster as a cofactor.

The catalysed reaction is 5-amino-1-(5-phospho-beta-D-ribosyl)imidazole + S-adenosyl-L-methionine = 4-amino-2-methyl-5-(phosphooxymethyl)pyrimidine + CO + 5'-deoxyadenosine + formate + L-methionine + 3 H(+). The protein operates within cofactor biosynthesis; thiamine diphosphate biosynthesis. Its function is as follows. Catalyzes the synthesis of the hydroxymethylpyrimidine phosphate (HMP-P) moiety of thiamine from aminoimidazole ribotide (AIR) in a radical S-adenosyl-L-methionine (SAM)-dependent reaction. The protein is Phosphomethylpyrimidine synthase of Desulfitobacterium hafniense (strain DSM 10664 / DCB-2).